A 602-amino-acid polypeptide reads, in one-letter code: Elongation factor 4 (602 aa).

Residues 5–187 form the tr-type G domain; it reads DHIRNFSIIA…ALVKRIPAPK (183 aa). Residues 17–22 and 134–137 contribute to the GTP site; these read DHGKST and NKID.

This sequence belongs to the TRAFAC class translation factor GTPase superfamily. Classic translation factor GTPase family. LepA subfamily.

The protein resides in the cell inner membrane. It catalyses the reaction GTP + H2O = GDP + phosphate + H(+). Functionally, required for accurate and efficient protein synthesis under certain stress conditions. May act as a fidelity factor of the translation reaction, by catalyzing a one-codon backward translocation of tRNAs on improperly translocated ribosomes. Back-translocation proceeds from a post-translocation (POST) complex to a pre-translocation (PRE) complex, thus giving elongation factor G a second chance to translocate the tRNAs correctly. Binds to ribosomes in a GTP-dependent manner. The sequence is that of Elongation factor 4 from Zymomonas mobilis subsp. mobilis (strain ATCC 31821 / ZM4 / CP4).